We begin with the raw amino-acid sequence, 761 residues long: ARF GTPase-activating protein GIT1 (761 aa).

In terms of domain architecture, Arf-GAP spans 1 to 124 (MSRKGPRAEV…AFVHKLPCRD (124 aa)). The interval 1–124 (MSRKGPRAEV…AFVHKLPCRD (124 aa)) is interaction with gamma-tubulin and localization to the centrosome. The segment at 11–34 (CADCSAPDPGWASISRGVLVCDEC) adopts a C4-type zinc-finger fold. ANK repeat units follow at residues 132 to 161 (DLSK…QANF), 166 to 195 (KGTT…DPGS), and 199 to 228 (NGRT…ELTD). At Tyr-224 the chain carries Phosphotyrosine. The interval 245-365 (HYIIPQMADS…QGKSLSSPTD (121 aa)) is interaction with PCLO. Residues 253–415 (DSLDLSELAK…NRARSMDSSD (163 aa)) are interaction with PTK2/FAK1. The interaction with ARHGEF7 stretch occupies residues 254–367 (SLDLSELAKA…KSLSSPTDNL (114 aa)). Residues 354–416 (RQQGKSLSSP…RARSMDSSDL (63 aa)) form a disordered region. Polar residues predominate over residues 357–374 (GKSLSSPTDNLELSLRSQ). Phosphoserine is present on residues Ser-359 and Ser-362. Phosphothreonine is present on Thr-364. An interaction with NCK2 and GRIN3A region spans residues 366–587 (NLELSLRSQS…QEGSRHTSKL (222 aa)). The required for localization at synapses stretch occupies residues 366-587 (NLELSLRSQS…QEGSRHTSKL (222 aa)). Phosphoserine is present on residues Ser-370 and Ser-375. Tyr-383 is modified (phosphotyrosine). Ser-385 and Ser-388 each carry phosphoserine. Positions 385-394 (SVASDEDTDQ) are enriched in acidic residues. Thr-392 is modified (phosphothreonine). Ser-410, Ser-413, and Ser-417 each carry phosphoserine. The tract at residues 411-466 (MDSSDLSDGAVTLQEYLELKKALATSEAKVQQLMKVNSSLSDELRRLQREIHKLQA) is interaction with MAPK1. The tract at residues 420–620 (AVTLQEYLEL…EGKRFLELGK (201 aa)) is interaction with IKBKG. The stretch at 440–474 (VQQLMKVNSSLSDELRRLQREIHKLQAENLQLRQP) forms a coiled coil. The segment at 471-501 (LRQPPGPVPTPPLPSERAEHTPMAPGGSTHR) is disordered. The span at 474–484 (PPGPVPTPPLP) shows a compositional bias: pro residues. At Thr-480 the chain carries Phosphothreonine. 2 positions are modified to phosphoserine: Ser-498 and Ser-536. Thr-537 bears the Phosphothreonine mark. Phosphotyrosine occurs at positions 545 and 554. A phosphoserine mark is found at Ser-561, Ser-571, Ser-592, and Ser-596. The segment at 572-606 (PLLSCSQEGSRHTSKLSRHGSGADSDYENTQSGDP) is disordered. Thr-601 is modified (phosphothreonine). Ser-630 is modified (phosphoserine). The segment at 637-761 (PGLPSTEDVI…VTITTREKKQ (125 aa)) is interaction with PXN and TGFB1I1.

As to quaternary structure, forms homodimers and possibly oligomers. May forms heterooligomers with GIT2. Interacts with G protein-coupled receptor kinases, including GRK2, GRK3, GRK5 and GRK6. Interacts with PPFIA1, PPFIA2 and PPFIA4. Interacts with GRIP1 and forms a ternary complex with PPFIA1 and GRIP1. Directly interacts with ARHGEF7/beta-PIX, forming in vitro a heptameric complex made of a GIT1 dimer and an ARHGEF7 trimer. Directly interacts with PXN/paxillin; this interaction is enhanced in the presence of ARHGEF7. Directly interacts (via C-terminus) with TGFB1I1/Hic-5 (via LD motif 3). Directly interacts with PTK2/FAK1. May interact with PTK2B/PYK2; this interaction may be indirect. Interacts with AMPA receptors GRIA2/3. Directly interacts with protein Piccolo/PCLO. Forms a complex with Ephrin-B1/EFNB1 and NCK2/GRB4 (via SH2); this interaction is important for spine morphogenesis and synapse formation. Interaction with NCK2 is transient and depends upon GIT1 phosphorylation at Tyr-383. Interacts with GRIN3A/GluN3A (via C-terminus); this interaction competes with GIT1 interaction with ARHGEF7 and limits synaptic localization of GIT1. Interacts with IKBKG/NEMO in resting bone mesenchymal stem cells, as well as in TNF-stimulated cells; this interaction may increase IKBKG affinity for 'Lys-63'-linked polyubiquitin chains. Interacts with GABA(A) receptors, including GABRB3 and GABRG2. Interacts with SCRIB. Interacts (via N- and C-terminus) with ENTR1/SDCCAG3 (via N-terminus); this interaction is direct. May form a tripartite complex with ENTR1 and PTPN13. Interacts with YWHAZ. Interacts with PAK1. Interacts with PAK3. Directly interacts (via N-terminus) with gamma-tubulin. Interacts with MAPK1 and MAPK3; this interaction is required for MAPK1/3 recruitment to focal adhesions. In terms of processing, phosphorylated by PAK1. Phosphorylation on tyrosine residues may be catalyzed by PTK2/FAK1 and SRC in growing fibroblasts. Phosphorylation at Tyr-383 is induced by activation of Ephrin-B1/EFNB1 and catalyzed by SRC family kinases. It is required for the interaction with NCK2 and for GIT1 recruitment to synapses in hippocampal neurons.

The protein resides in the cytoplasm. It localises to the synapse. The protein localises to the presynapse. Its subcellular location is the postsynapse. It is found in the postsynaptic density. The protein resides in the cell junction. It localises to the focal adhesion. The protein localises to the cell projection. Its subcellular location is the lamellipodium. It is found in the cytoskeleton. The protein resides in the microtubule organizing center. It localises to the centrosome. The protein localises to the spindle pole. Its function is as follows. GTPase-activating protein for ADP ribosylation factor family members, including ARF1. Multidomain scaffold protein that interacts with numerous proteins and therefore participates in many cellular functions, including receptor internalization, focal adhesion remodeling, and signaling by both G protein-coupled receptors and tyrosine kinase receptors. Through PAK1 activation, positively regulates microtubule nucleation during interphase. Plays a role in the regulation of cytokinesis; for this function, may act in a pathway also involving ENTR1 and PTPN13. May promote cell motility both by regulating focal complex dynamics and by local activation of RAC1. May act as scaffold for MAPK1/3 signal transduction in focal adhesions. Recruits MAPK1/3/ERK1/2 to focal adhesions after EGF stimulation via a Src-dependent pathway, hence stimulating cell migration. Plays a role in brain development and function. Involved in the regulation of spine density and synaptic plasticity that is required for processes involved in learning. Plays an important role in dendritic spine morphogenesis and synapse formation. In hippocampal neurons, recruits guanine nucleotide exchange factors (GEFs), such as ARHGEF7/beta-PIX, to the synaptic membrane. These in turn locally activate RAC1, which is an essential step for spine morphogenesis and synapse formation. May contribute to the organization of presynaptic active zones through oligomerization and formation of a Piccolo/PCLO-based protein network, which includes ARHGEF7/beta-PIX and FAK1. In neurons, through its interaction with liprin-alpha family members, may be required for AMPA receptor (GRIA2/3) proper targeting to the cell membrane. In complex with GABA(A) receptors and ARHGEF7, plays a crucial role in regulating GABA(A) receptor synaptic stability, maintaining GPHN/gephyrin scaffolds and hence GABAergic inhibitory synaptic transmission, by locally coordinating RAC1 and PAK1 downstream effector activity, leading to F-actin stabilization. May also be important for RAC1 downstream signaling pathway through PAK3 and regulation of neuronal inhibitory transmission at presynaptic input. Required for successful bone regeneration during fracture healing. The function in intramembranous ossification may, at least partly, exerted by macrophages in which GIT1 is a key negative regulator of redox homeostasis, IL1B production, and glycolysis, acting through the ERK1/2/NRF2/NFE2L2 axis. May play a role in angiogenesis during fracture healing. In this process, may regulate activation of the canonical NF-kappa-B signal in bone mesenchymal stem cells by enhancing the interaction between NEMO and 'Lys-63'-ubiquitinated RIPK1/RIP1, eventually leading to enhanced production of VEGFA and others angiogenic factors. Essential for VEGF signaling through the activation of phospholipase C-gamma and ERK1/2, hence may control endothelial cell proliferation and angiogenesis. The chain is ARF GTPase-activating protein GIT1 (GIT1) from Homo sapiens (Human).